A 317-amino-acid chain; its full sequence is Serine/threonine-protein phosphatase PP1 isozyme 1 (317 aa).

Residues aspartate 75, histidine 77, aspartate 103, and asparagine 135 each contribute to the Mn(2+) site. The active-site Proton donor is histidine 136. Histidine 184 and histidine 259 together coordinate Mn(2+).

It belongs to the PPP phosphatase family. PP-1 subfamily. Mn(2+) serves as cofactor.

It carries out the reaction O-phospho-L-seryl-[protein] + H2O = L-seryl-[protein] + phosphate. It catalyses the reaction O-phospho-L-threonyl-[protein] + H2O = L-threonyl-[protein] + phosphate. This is Serine/threonine-protein phosphatase PP1 isozyme 1 (NPP1) from Nicotiana tabacum (Common tobacco).